Reading from the N-terminus, the 506-residue chain is MEMEDNWWVTKLKALESKPQRLDALTAMNSAIAKEAALPRQIIERLLTTDQLYDCANPAADSHVPKDQAVDVTLELLCHCLDQLAMDTADEQLSSLLRRGLTHSNPALRAQVLASLFKKLLRQLTVGQVLTLPNNELIFLILDELKQPDTQSTSLAINILSIVLPQRISNADVQAKLVQLLKQNEIVRCRAYELAVVLAKKSATLLSDVTFILDAALSELDNDDVLLQASVMELLVPLAEQNHGLSYMERRRVLDIISYRVQRVEEHPLDALLVPSIMKFFGKISVYQPLKIIGGYPHMLACLFMQLQSEDESILPTAMDTLANLATTPQGKILLNMHFSGAMEKSFKKYGSHTKKLSAHIKKRLLNSLDVIYDFKTPPATEIINIGKNWYECFAGGAHANIIMDLINTPFPDLQMAALSFLKTICKYNWGIVALKNTGGAVEFLLSRQKDLHRDIKYMKWQIMEILSASAEFSPTETIRFTAYVNEGPYHVQADLDVATEPQGNA.

Belongs to the proteasome subunit S5B/HSM3 family. In terms of assembly, interacts with PI31; this interaction is increased by PI31 ADP-ribosylation. Interacts with Rpt2.

Acts as a chaperone during the assembly of the 26S proteasome. The sequence is that of 26S proteasome non-ATPase regulatory subunit 5 from Drosophila melanogaster (Fruit fly).